Here is an 824-residue protein sequence, read N- to C-terminus: Leucine--tRNA ligase (824 aa).

The 'HIGH' region signature appears at 41-51; the sequence is PYPSGTLHVGH. A 'KMSKS' region motif is present at residues 580–584; that stretch reads KMSKS. Lysine 583 contacts ATP.

The protein belongs to the class-I aminoacyl-tRNA synthetase family.

It localises to the cytoplasm. The catalysed reaction is tRNA(Leu) + L-leucine + ATP = L-leucyl-tRNA(Leu) + AMP + diphosphate. This is Leucine--tRNA ligase from Thermotoga maritima (strain ATCC 43589 / DSM 3109 / JCM 10099 / NBRC 100826 / MSB8).